Reading from the N-terminus, the 95-residue chain is uncharacterized protein (95 aa).

The chain crosses the membrane as a helical span at residues 29 to 53 (LVSTATCMAALFLRFKLIAWVAFIL).

The protein resides in the membrane. This is an uncharacterized protein from Schizosaccharomyces pombe (strain 972 / ATCC 24843) (Fission yeast).